Consider the following 283-residue polypeptide: Polyamine aminopropyltransferase (283 aa).

Residues glycine 3 to lysine 236 enclose the PABS domain. Glutamine 32 is an S-methyl-5'-thioadenosine binding site. 2 residues coordinate spermidine: histidine 63 and aspartate 87. S-methyl-5'-thioadenosine-binding positions include glutamate 107 and aspartate 138–glycine 139. The Proton acceptor role is filled by aspartate 156. Aspartate 156 to aspartate 159 contacts spermidine. Proline 163 serves as a coordination point for S-methyl-5'-thioadenosine.

The protein belongs to the spermidine/spermine synthase family. In terms of assembly, homodimer or homotetramer.

It localises to the cytoplasm. It carries out the reaction S-adenosyl 3-(methylsulfanyl)propylamine + putrescine = S-methyl-5'-thioadenosine + spermidine + H(+). Its pathway is amine and polyamine biosynthesis; spermidine biosynthesis; spermidine from putrescine: step 1/1. In terms of biological role, catalyzes the irreversible transfer of a propylamine group from the amino donor S-adenosylmethioninamine (decarboxy-AdoMet) to putrescine (1,4-diaminobutane) to yield spermidine. The sequence is that of Polyamine aminopropyltransferase from Moorella thermoacetica (strain ATCC 39073 / JCM 9320).